The primary structure comprises 403 residues: GDSL esterase/lipase At1g28590 (403 aa).

Positions 1–27 (MASLDSLPAMKLVRFILSTLLVTSVNS) are cleaved as a signal peptide. Catalysis depends on serine 43, which acts as the Nucleophile. N-linked (GlcNAc...) asparagine glycans are attached at residues asparagine 139 and asparagine 323. Active-site residues include aspartate 346 and histidine 349.

The protein belongs to the 'GDSL' lipolytic enzyme family.

It localises to the secreted. This chain is GDSL esterase/lipase At1g28590, found in Arabidopsis thaliana (Mouse-ear cress).